Consider the following 185-residue polypeptide: Ribosome-recycling factor (185 aa).

Belongs to the RRF family.

The protein localises to the cytoplasm. Responsible for the release of ribosomes from messenger RNA at the termination of protein biosynthesis. May increase the efficiency of translation by recycling ribosomes from one round of translation to another. The sequence is that of Ribosome-recycling factor from Listeria welshimeri serovar 6b (strain ATCC 35897 / DSM 20650 / CCUG 15529 / CIP 8149 / NCTC 11857 / SLCC 5334 / V8).